The following is a 208-amino-acid chain: Transcription factor atf-4 homolog (208 aa).

Disordered stretches follow at residues 18-47 and 106-165; these read HNQT…YFNP and ERRS…EKEE. Over residues 110 to 120 the composition is skewed to low complexity; sequence NSSASPASNWS. The segment covering 121–141 has biased composition (basic and acidic residues); that stretch reads SDEHDSQSEKSYHPYKTPEKK. A bZIP domain is found at 138–201; sequence PEKKERKKAQ…RYFKKFMTEM (64 aa). A basic motif region spans residues 140–163; that stretch reads KKERKKAQNRLAATRYREKKRREK. A leucine-zipper region spans residues 173 to 187; the sequence is LSVTNGKLKDQVSEL.

It belongs to the bZIP family.

The protein localises to the nucleus. Functionally, transcription factor. Involved in positively modulating longevity and stress tolerance, probably acting by positively regulating expression of transsulfuration enzyme cth-2, leading to increased hydrogen sulfide production and therefore increased protein persulfidation, a protective modification of redox-reactive cysteines. May mediate longevity and increased stress resistance induced by mTORC1 suppression. This chain is Transcription factor atf-4 homolog, found in Caenorhabditis elegans.